Consider the following 477-residue polypeptide: Aspartyl/glutamyl-tRNA(Asn/Gln) amidotransferase subunit B (477 aa).

It belongs to the GatB/GatE family. GatB subfamily. Heterotrimer of A, B and C subunits.

The enzyme catalyses L-glutamyl-tRNA(Gln) + L-glutamine + ATP + H2O = L-glutaminyl-tRNA(Gln) + L-glutamate + ADP + phosphate + H(+). It catalyses the reaction L-aspartyl-tRNA(Asn) + L-glutamine + ATP + H2O = L-asparaginyl-tRNA(Asn) + L-glutamate + ADP + phosphate + 2 H(+). Allows the formation of correctly charged Asn-tRNA(Asn) or Gln-tRNA(Gln) through the transamidation of misacylated Asp-tRNA(Asn) or Glu-tRNA(Gln) in organisms which lack either or both of asparaginyl-tRNA or glutaminyl-tRNA synthetases. The reaction takes place in the presence of glutamine and ATP through an activated phospho-Asp-tRNA(Asn) or phospho-Glu-tRNA(Gln). The protein is Aspartyl/glutamyl-tRNA(Asn/Gln) amidotransferase subunit B of Ligilactobacillus salivarius (strain UCC118) (Lactobacillus salivarius).